We begin with the raw amino-acid sequence, 429 residues long: Adenylosuccinate synthetase (429 aa).

GTP-binding positions include 12 to 18 (GDEGKGK) and 40 to 42 (GHT). Asp13 (proton acceptor) is an active-site residue. Mg(2+) is bound by residues Asp13 and Gly40. Residues 13–16 (DEGK), 38–41 (NAGH), Thr129, Arg143, Gln223, Thr238, and Arg302 contribute to the IMP site. His41 serves as the catalytic Proton donor. 298 to 304 (VVTGRKR) contributes to the substrate binding site. GTP-binding positions include Arg304, 330–332 (KLD), and 412–414 (STS).

The protein belongs to the adenylosuccinate synthetase family. In terms of assembly, homodimer. The cofactor is Mg(2+).

It is found in the cytoplasm. The catalysed reaction is IMP + L-aspartate + GTP = N(6)-(1,2-dicarboxyethyl)-AMP + GDP + phosphate + 2 H(+). It participates in purine metabolism; AMP biosynthesis via de novo pathway; AMP from IMP: step 1/2. Plays an important role in the de novo pathway of purine nucleotide biosynthesis. Catalyzes the first committed step in the biosynthesis of AMP from IMP. The chain is Adenylosuccinate synthetase from Brucella abortus (strain 2308).